The following is a 1464-amino-acid chain: Glutamate receptor ionotropic, NMDA 2A (1464 aa).

A signal peptide spans 1–22 (MGRVGYWTLLVLPALLVWRGPA). Residues 23 to 556 (PSAAAEKGPP…SAFLEPFSAS (534 aa)) lie on the Extracellular side of the membrane. Zn(2+) is bound at residue His44. Asn75 carries an N-linked (GlcNAc...) asparagine glycan. Cys87 and Cys320 form a disulfide bridge. 3 residues coordinate Zn(2+): His128, Glu266, and Asp282. Asn340, Asn380, Asn443, and Asn444 each carry an N-linked (GlcNAc...) asparagine glycan. 2 disulfide bridges follow: Cys429–Cys455 and Cys436–Cys456. L-glutamate is bound by residues Ser511, Thr513, and Arg518. The N-linked (GlcNAc...) asparagine glycan is linked to Asn541. A helical membrane pass occupies residues 557–576 (VWVMMFVMLLIVSAIAVFVF). Residues 577–600 (EYFSPVGYNRNLAKGKAPHGPSFT) are Cytoplasmic-facing. Residues 599-620 (FTIGKAIWLLWGLVFNNSVPVQ) form a pore-forming region. The discontinuously helical intramembrane region spans 601–615 (IGKAIWLLWGLVFNN). Residues 616 to 625 (SVPVQNPKGT) lie on the Cytoplasmic side of the membrane. Residues 626–646 (TSKIMVSVWAFFAVIFLASYT) traverse the membrane as a helical segment. The Extracellular segment spans residues 647–814 (ANLAAFMIQE…NEVMSSQLDI (168 aa)). Asn687 carries N-linked (GlcNAc...) asparagine glycosylation. L-glutamate contacts are provided by Ser689, Thr690, and Asp731. Cys745 and Cys800 form a disulfide bridge. Residues 815–835 (DNMAGVFYMLAAAMALSLITF) form a helical membrane-spanning segment. Residues 836-1464 (IWEHLFYWKL…KKMPSIESDV (629 aa)) lie on the Cytoplasmic side of the membrane. Ser882, Ser890, and Ser929 each carry phosphoserine. Polar residues-rich tracts occupy residues 997 to 1010 (EVAVSTESKANSRP) and 1023 to 1032 (QDSLSQNPVS). Positions 997 to 1083 (EVAVSTESKA…PDNSKNHKTK (87 aa)) are disordered. Position 1025 is a phosphoserine (Ser1025). Composition is skewed to basic and acidic residues over residues 1033 to 1043 (QRDEATAENRT) and 1052 to 1061 (LPEEMAHSDI). A phosphoserine mark is found at Ser1059 and Ser1062. Residues 1070-1083 (CHREPDNSKNHKTK) are compositionally biased toward basic and acidic residues. Phosphoserine occurs at positions 1198 and 1291. The disordered stretch occupies residues 1335 to 1372 (KLSGKKSSLFPQGLEDSKRSKSLLPDHTSDNPFLHSHR). A PDZ-binding motif is present at residues 1462 to 1464 (SDV).

It belongs to the glutamate-gated ion channel (TC 1.A.10.1) family. NR2A/GRIN2A subfamily. As to quaternary structure, heterotetramer. Forms heterotetrameric channels composed of two GluN1/zeta subunits (GRIN1), and two identical GluN2/epsilon subunits (GRIN2A, GRIN2B, GRIN2C or GRIN2D) or GluN3 subunits (GRIN3A or GRIN3B) (in vitro). Can also form heterotetrameric channels that contain at least two GluN1 subunits and at least two different GluN2 subunits (or a combination of one GluN2 and one GluN3 subunits) (in vitro). In vivo, the subunit composition may depend on the expression levels of the different subunits. Found in a complex with GRIN1, GRIN3A and PPP2CB. Found in a complex with GRIN1 and GRIN3B. Interacts with AIP1. Interacts with HIP1 and NETO1. Interacts with SNX27 (via PDZ domain); the interaction is required for recycling to the plasma membrane when endocytosed and prevent degradation in lysosomes. Interacts with PDZ domains of PATJ and DLG4. Interacts with LRFN2. Interacts with RPH3A and DLG4; this ternary complex regulates NMDA receptor composition at postsynaptic membranes. Interacts with SORCS2. Interacts with ARC; preventing ARC oligomerization. Interacts (via the extreme C-terminus) with FRMPD2 (the second PDZ domain); the interaction is direct and is likely to promote NMDAR-mediated neural signal transmission. GRIN2A binds FRMPD2 with lower affinity than GRIN2B.

The protein localises to the cell projection. It localises to the dendritic spine. Its subcellular location is the cell membrane. The protein resides in the synapse. It is found in the postsynaptic cell membrane. The protein localises to the cytoplasmic vesicle membrane. It catalyses the reaction Ca(2+)(in) = Ca(2+)(out). The enzyme catalyses Na(+)(in) = Na(+)(out). It carries out the reaction K(+)(in) = K(+)(out). Its activity is regulated as follows. NMDA glutamate receptor activity is inhibited by endogenous Mg(2+) in a voltage-dependent manner. NMDA glutamate receptor activity is inhibited by endogenous Zn(2+). NMDA glutamate receptor activity is inhibited by endogenous protons. Component of N-methyl-D-aspartate (NMDA) receptors (NMDARs) that function as heterotetrameric, ligand-gated cation channels with high calcium permeability and voltage-dependent block by Mg(2+). NMDARs participate in synaptic plasticity for learning and memory formation by contributing to the slow phase of excitatory postsynaptic current, long-term synaptic potentiation, and learning. Channel activation requires binding of the neurotransmitter L-glutamate to the GluN2 subunit, glycine or D-serine binding to the GluN1 subunit, plus membrane depolarization to eliminate channel inhibition by Mg(2+). NMDARs mediate simultaneously the potasium efflux and the influx of calcium and sodium. Each GluN2 subunit confers differential attributes to channel properties, including activation, deactivation and desensitization kinetics, pH sensitivity, Ca2(+) permeability, and binding to allosteric modulators. Participates in the synaptic plasticity regulation through activation by the L-glutamate releaseed by BEST1, into the synaptic cleft, upon F2R/PAR-1 activation in astrocyte. The protein is Glutamate receptor ionotropic, NMDA 2A of Homo sapiens (Human).